Reading from the N-terminus, the 640-residue chain is Paramyosin, short form (640 aa).

Nonhelical region stretches follow at residues 1–122 (MALA…PDTV) and 420–640 (KLEQ…TITE). Positions 123-619 (VERSRQRRRR…IIRAKHRTFV (497 aa)) form a coiled coil.

The protein belongs to the paramyosin family. In terms of processing, phosphorylated. Found in all adult muscle tissues except in indirect flight muscles and a set of temporary abdominal muscles. Not detected in larval muscle.

Its subcellular location is the cytoplasm. It localises to the myofibril. Functionally, paramyosin is a major structural component of many thick filaments isolated from invertebrate muscles. The polypeptide is Paramyosin, short form (Prm) (Drosophila melanogaster (Fruit fly)).